Consider the following 232-residue polypeptide: 6-phosphogluconolactonase (232 aa).

It belongs to the glucosamine/galactosamine-6-phosphate isomerase family. 6-phosphogluconolactonase subfamily.

The enzyme catalyses 6-phospho-D-glucono-1,5-lactone + H2O = 6-phospho-D-gluconate + H(+). Its pathway is carbohydrate degradation; pentose phosphate pathway; D-ribulose 5-phosphate from D-glucose 6-phosphate (oxidative stage): step 2/3. Functionally, hydrolysis of 6-phosphogluconolactone to 6-phosphogluconate. The chain is 6-phosphogluconolactonase (pgl) from Aggregatibacter actinomycetemcomitans (Actinobacillus actinomycetemcomitans).